The chain runs to 173 residues: ATP synthase subunit b (173 aa).

The helical transmembrane segment at 18-38 (IFWSLVILIIVAVFFYKFFLP) threads the bilayer.

The protein belongs to the ATPase B chain family. As to quaternary structure, F-type ATPases have 2 components, F(1) - the catalytic core - and F(0) - the membrane proton channel. F(1) has five subunits: alpha(3), beta(3), gamma(1), delta(1), epsilon(1). F(0) has three main subunits: a(1), b(2) and c(10-14). The alpha and beta chains form an alternating ring which encloses part of the gamma chain. F(1) is attached to F(0) by a central stalk formed by the gamma and epsilon chains, while a peripheral stalk is formed by the delta and b chains.

Its subcellular location is the cell membrane. Functionally, f(1)F(0) ATP synthase produces ATP from ADP in the presence of a proton or sodium gradient. F-type ATPases consist of two structural domains, F(1) containing the extramembraneous catalytic core and F(0) containing the membrane proton channel, linked together by a central stalk and a peripheral stalk. During catalysis, ATP synthesis in the catalytic domain of F(1) is coupled via a rotary mechanism of the central stalk subunits to proton translocation. Its function is as follows. Component of the F(0) channel, it forms part of the peripheral stalk, linking F(1) to F(0). This chain is ATP synthase subunit b, found in Bifidobacterium adolescentis (strain ATCC 15703 / DSM 20083 / NCTC 11814 / E194a).